Here is a 542-residue protein sequence, read N- to C-terminus: Heterogeneous nuclear ribonucleoprotein L-like (542 aa).

A disordered region spans residues Met-1 to Lys-71. Residues Tyr-18–Glu-29 show a composition bias toward basic and acidic residues. A Glycyl lysine isopeptide (Lys-Gly) (interchain with G-Cter in SUMO2) cross-link involves residue Lys-26. Ser-35 carries the phosphoserine modification. Thr-46 carries the phosphothreonine modification. Gly residues predominate over residues Arg-48–Arg-58. Phosphoserine occurs at positions 59, 68, and 75. 3 consecutive RRM domains span residues Pro-76–Ser-150, Asn-166–Pro-244, and Ser-335–Gln-409. A Glycyl lysine isopeptide (Lys-Gly) (interchain with G-Cter in SUMO2) cross-link involves residue Lys-491.

Interacts with HNRNPL. As to expression, widely expressed. Detected in bone marrow stroma cells, skeletal muscle, heart, placenta, pancreas, kidney and lung.

In terms of biological role, RNA-binding protein that functions as a regulator of alternative splicing for multiple target mRNAs, including PTPRC/CD45 and STAT5A. Required for alternative splicing of PTPRC. This chain is Heterogeneous nuclear ribonucleoprotein L-like (HNRNPLL), found in Homo sapiens (Human).